A 207-amino-acid chain; its full sequence is Small ribosomal subunit protein uS4 (207 aa).

The disordered stretch occupies residues 32–55; it reads CKLDSKPGQHGRTSGARTSDYGTQ. Over residues 42–53 the composition is skewed to polar residues; that stretch reads GRTSGARTSDYG. One can recognise an S4 RNA-binding domain in the interval 97-158; that stretch reads SRLDNVVYRM…TKKKQARILE (62 aa).

Belongs to the universal ribosomal protein uS4 family. Part of the 30S ribosomal subunit. Contacts protein S5. The interaction surface between S4 and S5 is involved in control of translational fidelity.

Its function is as follows. One of the primary rRNA binding proteins, it binds directly to 16S rRNA where it nucleates assembly of the body of the 30S subunit. With S5 and S12 plays an important role in translational accuracy. In Paraburkholderia phytofirmans (strain DSM 17436 / LMG 22146 / PsJN) (Burkholderia phytofirmans), this protein is Small ribosomal subunit protein uS4.